A 343-amino-acid polypeptide reads, in one-letter code: Glycerol-3-phosphate dehydrogenase [NAD(P)+] (343 aa).

The NADPH site is built by Ser-11, Trp-12, His-32, Arg-33, and Lys-106. Residues Lys-106, Gly-136, and Ser-138 each contribute to the sn-glycerol 3-phosphate site. Ala-140 is an NADPH binding site. Sn-glycerol 3-phosphate is bound by residues Lys-192, Asp-245, Ser-255, Arg-256, and Asn-257. Lys-192 functions as the Proton acceptor in the catalytic mechanism. Residue Arg-256 coordinates NADPH. NADPH is bound by residues Val-280 and Glu-282.

This sequence belongs to the NAD-dependent glycerol-3-phosphate dehydrogenase family.

Its subcellular location is the cytoplasm. It carries out the reaction sn-glycerol 3-phosphate + NAD(+) = dihydroxyacetone phosphate + NADH + H(+). The enzyme catalyses sn-glycerol 3-phosphate + NADP(+) = dihydroxyacetone phosphate + NADPH + H(+). It functions in the pathway membrane lipid metabolism; glycerophospholipid metabolism. In terms of biological role, catalyzes the reduction of the glycolytic intermediate dihydroxyacetone phosphate (DHAP) to sn-glycerol 3-phosphate (G3P), the key precursor for phospholipid synthesis. This chain is Glycerol-3-phosphate dehydrogenase [NAD(P)+], found in Geobacillus thermodenitrificans (strain NG80-2).